Reading from the N-terminus, the 204-residue chain is 3-isopropylmalate dehydratase small subunit (204 aa).

This sequence belongs to the LeuD family. LeuD type 1 subfamily. As to quaternary structure, heterodimer of LeuC and LeuD.

The catalysed reaction is (2R,3S)-3-isopropylmalate = (2S)-2-isopropylmalate. The protein operates within amino-acid biosynthesis; L-leucine biosynthesis; L-leucine from 3-methyl-2-oxobutanoate: step 2/4. Its function is as follows. Catalyzes the isomerization between 2-isopropylmalate and 3-isopropylmalate, via the formation of 2-isopropylmaleate. This Roseiflexus castenholzii (strain DSM 13941 / HLO8) protein is 3-isopropylmalate dehydratase small subunit.